Consider the following 147-residue polypeptide: Large ribosomal subunit protein uL13 (147 aa).

It belongs to the universal ribosomal protein uL13 family. In terms of assembly, part of the 50S ribosomal subunit.

Its function is as follows. This protein is one of the early assembly proteins of the 50S ribosomal subunit, although it is not seen to bind rRNA by itself. It is important during the early stages of 50S assembly. The sequence is that of Large ribosomal subunit protein uL13 from Corynebacterium diphtheriae (strain ATCC 700971 / NCTC 13129 / Biotype gravis).